A 194-amino-acid polypeptide reads, in one-letter code: Fe/S biogenesis protein NfuA (194 aa).

2 residues coordinate [4Fe-4S] cluster: cysteine 152 and cysteine 155.

The protein belongs to the NfuA family. In terms of assembly, homodimer. [4Fe-4S] cluster is required as a cofactor.

Its function is as follows. Involved in iron-sulfur cluster biogenesis. Binds a 4Fe-4S cluster, can transfer this cluster to apoproteins, and thereby intervenes in the maturation of Fe/S proteins. Could also act as a scaffold/chaperone for damaged Fe/S proteins. This chain is Fe/S biogenesis protein NfuA, found in Pseudomonas putida (strain GB-1).